Consider the following 572-residue polypeptide: Oxygen-dependent choline dehydrogenase (572 aa).

FAD is bound at residue 7–36 (DYIIIGAGSAGNVLATRLTEDRDVTVLLLE). His474 serves as the catalytic Proton acceptor.

It belongs to the GMC oxidoreductase family. It depends on FAD as a cofactor.

The enzyme catalyses choline + A = betaine aldehyde + AH2. It carries out the reaction betaine aldehyde + NAD(+) + H2O = glycine betaine + NADH + 2 H(+). Its pathway is amine and polyamine biosynthesis; betaine biosynthesis via choline pathway; betaine aldehyde from choline (cytochrome c reductase route): step 1/1. Functionally, involved in the biosynthesis of the osmoprotectant glycine betaine. Catalyzes the oxidation of choline to betaine aldehyde and betaine aldehyde to glycine betaine at the same rate. The polypeptide is Oxygen-dependent choline dehydrogenase (Paraburkholderia phymatum (strain DSM 17167 / CIP 108236 / LMG 21445 / STM815) (Burkholderia phymatum)).